The primary structure comprises 74 residues: Translation initiation factor IF-1, chloroplastic (74 aa).

The S1-like domain maps to 1–72 (MERQNLIEME…TKGRITYRLR (72 aa)).

Belongs to the IF-1 family. In terms of assembly, component of the 30S ribosomal translation pre-initiation complex which assembles on the 30S ribosome in the order IF-2 and IF-3, IF-1 and N-formylmethionyl-tRNA(fMet); mRNA recruitment can occur at any time during PIC assembly.

It is found in the plastid. Its subcellular location is the chloroplast. Its function is as follows. One of the essential components for the initiation of protein synthesis. Stabilizes the binding of IF-2 and IF-3 on the 30S subunit to which N-formylmethionyl-tRNA(fMet) subsequently binds. Helps modulate mRNA selection, yielding the 30S pre-initiation complex (PIC). Upon addition of the 50S ribosomal subunit IF-1, IF-2 and IF-3 are released leaving the mature 70S translation initiation complex. In Mesostigma viride (Green alga), this protein is Translation initiation factor IF-1, chloroplastic.